A 380-amino-acid polypeptide reads, in one-letter code: Carbonic anhydrase 2 (380 aa).

Positions 1 to 20 (MARTGALLLAALALAGCAQA) are cleaved as a signal peptide. Residues 38–322 (DHWDHSLNGE…HHHRRLLHNH (285 aa)) form the Alpha-carbonic anhydrase domain. Cystine bridges form between Cys-61–Cys-264, Cys-194–Cys-198, and Cys-296–Cys-354. Residue Asn-101 is glycosylated (N-linked (GlcNAc...) asparagine). Residue His-112 is the Proton acceptor of the active site. Residue Asn-135 is glycosylated (N-linked (GlcNAc...) asparagine). 3 residues coordinate Zn(2+): His-163, His-165, and His-182. 260 to 261 (TT) contacts substrate. Residue Asn-297 is glycosylated (N-linked (GlcNAc...) asparagine).

It belongs to the alpha-carbonic anhydrase family. Tetramer of two large and two small subunits linked by two disulfide bonds. Zn(2+) serves as cofactor.

It is found in the periplasm. The catalysed reaction is hydrogencarbonate + H(+) = CO2 + H2O. Functionally, reversible hydration of carbon dioxide. This is Carbonic anhydrase 2 (CAH2) from Chlamydomonas reinhardtii (Chlamydomonas smithii).